Consider the following 269-residue polypeptide: Imidazoleglycerol-phosphate dehydratase 3, chloroplastic (269 aa).

A chloroplast-targeting transit peptide spans 1–51 (MTTAPVVSPSLSRLHSAPASPFPKAPVGSGAGVAFPARPYGPSLRLRSAVM). Substrate-binding positions include E83, 109–117 (HMLDQLASH), 135–139 (HHSNE), R161, and R183. Residues H109, H135, H136, and E139 each coordinate Mn(2+). The Mn(2+) site is built by H207, H231, H232, and E235. Substrate contacts are provided by residues 231 to 239 (HHIIEATFK) and 261 to 263 (SSK).

This sequence belongs to the imidazoleglycerol-phosphate dehydratase family. Requires Mn(2+) as cofactor.

Its subcellular location is the plastid. It is found in the chloroplast. The enzyme catalyses D-erythro-1-(imidazol-4-yl)glycerol 3-phosphate = 3-(imidazol-4-yl)-2-oxopropyl phosphate + H2O. Its pathway is amino-acid biosynthesis; L-histidine biosynthesis; L-histidine from 5-phospho-alpha-D-ribose 1-diphosphate: step 6/9. The polypeptide is Imidazoleglycerol-phosphate dehydratase 3, chloroplastic (Triticum aestivum (Wheat)).